Reading from the N-terminus, the 215-residue chain is Small ribosomal subunit protein uS2 (215 aa).

The protein belongs to the universal ribosomal protein uS2 family.

The protein is Small ribosomal subunit protein uS2 of Caldivirga maquilingensis (strain ATCC 700844 / DSM 13496 / JCM 10307 / IC-167).